The sequence spans 214 residues: Ribosomal RNA small subunit methyltransferase G (214 aa).

Residues Gly-81, Met-86, 132–133 (VE), and Arg-147 each bind S-adenosyl-L-methionine.

This sequence belongs to the methyltransferase superfamily. RNA methyltransferase RsmG family.

It localises to the cytoplasm. It catalyses the reaction guanosine(527) in 16S rRNA + S-adenosyl-L-methionine = N(7)-methylguanosine(527) in 16S rRNA + S-adenosyl-L-homocysteine. Specifically methylates the N7 position of guanine in position 527 of 16S rRNA. The chain is Ribosomal RNA small subunit methyltransferase G from Pseudomonas fluorescens (strain Pf0-1).